The chain runs to 343 residues: Small ribosomal subunit biogenesis GTPase RsgA (343 aa).

The CP-type G domain occupies 116 to 275; it reads RGQLKPVAAN…LIDSPGIREF (160 aa). Residues 163–166 and 217–225 contribute to the GTP site; these read NKAD and GQSGVGKSS. Zn(2+)-binding residues include cysteine 299, cysteine 304, histidine 306, and cysteine 312.

This sequence belongs to the TRAFAC class YlqF/YawG GTPase family. RsgA subfamily. In terms of assembly, monomer. Associates with 30S ribosomal subunit, binds 16S rRNA. Zn(2+) is required as a cofactor.

The protein resides in the cytoplasm. Functionally, one of several proteins that assist in the late maturation steps of the functional core of the 30S ribosomal subunit. Helps release RbfA from mature subunits. May play a role in the assembly of ribosomal proteins into the subunit. Circularly permuted GTPase that catalyzes slow GTP hydrolysis, GTPase activity is stimulated by the 30S ribosomal subunit. The chain is Small ribosomal subunit biogenesis GTPase RsgA from Pseudomonas syringae pv. syringae (strain B728a).